Consider the following 51-residue polypeptide: Large ribosomal subunit protein eL39 (51 aa).

Residues 1-23 (MSALKKSFIKRKLAKKQKQNRPM) are disordered. The segment covering 7-19 (SFIKRKLAKKQKQ) has biased composition (basic residues).

This sequence belongs to the eukaryotic ribosomal protein eL39 family. In terms of assembly, interacts with impact.

This Caenorhabditis elegans protein is Large ribosomal subunit protein eL39 (rpl-39).